The primary structure comprises 356 residues: UDP-N-acetylglucosamine--N-acetylmuramyl-(pentapeptide) pyrophosphoryl-undecaprenol N-acetylglucosamine transferase (356 aa).

Residues 11 to 13 (TAG), asparagine 123, arginine 159, and serine 192 each bind UDP-N-acetyl-alpha-D-glucosamine.

The protein belongs to the glycosyltransferase 28 family. MurG subfamily.

It is found in the cell membrane. It catalyses the reaction di-trans,octa-cis-undecaprenyl diphospho-N-acetyl-alpha-D-muramoyl-L-alanyl-D-glutamyl-meso-2,6-diaminopimeloyl-D-alanyl-D-alanine + UDP-N-acetyl-alpha-D-glucosamine = di-trans,octa-cis-undecaprenyl diphospho-[N-acetyl-alpha-D-glucosaminyl-(1-&gt;4)]-N-acetyl-alpha-D-muramoyl-L-alanyl-D-glutamyl-meso-2,6-diaminopimeloyl-D-alanyl-D-alanine + UDP + H(+). It participates in cell wall biogenesis; peptidoglycan biosynthesis. In terms of biological role, cell wall formation. Catalyzes the transfer of a GlcNAc subunit on undecaprenyl-pyrophosphoryl-MurNAc-pentapeptide (lipid intermediate I) to form undecaprenyl-pyrophosphoryl-MurNAc-(pentapeptide)GlcNAc (lipid intermediate II). The polypeptide is UDP-N-acetylglucosamine--N-acetylmuramyl-(pentapeptide) pyrophosphoryl-undecaprenol N-acetylglucosamine transferase (Tropheryma whipplei (strain Twist) (Whipple's bacillus)).